The primary structure comprises 212 residues: Protein-L-isoaspartate O-methyltransferase (212 aa).

Ser60 is a catalytic residue.

Belongs to the methyltransferase superfamily. L-isoaspartyl/D-aspartyl protein methyltransferase family.

It localises to the cytoplasm. The enzyme catalyses [protein]-L-isoaspartate + S-adenosyl-L-methionine = [protein]-L-isoaspartate alpha-methyl ester + S-adenosyl-L-homocysteine. Catalyzes the methyl esterification of L-isoaspartyl residues in peptides and proteins that result from spontaneous decomposition of normal L-aspartyl and L-asparaginyl residues. It plays a role in the repair and/or degradation of damaged proteins. This is Protein-L-isoaspartate O-methyltransferase from Methanococcus maripaludis (strain C6 / ATCC BAA-1332).